Consider the following 135-residue polypeptide: Large ribosomal subunit protein eL32 (135 aa).

The protein belongs to the eukaryotic ribosomal protein eL32 family.

This is Large ribosomal subunit protein eL32 (rpl32e) from Methanococcus vannielii.